Consider the following 998-residue polypeptide: UPF0182 protein AAur_2732 (998 aa).

Helical transmembrane passes span 18–38, 64–84, 115–135, 168–188, 211–231, 260–280, and 287–307; these read GALTPTLIVVAVAVVGFIFFA, IITFLIGFAMMFAAVFFAIRI, VVMIGLPILFGLFAGSAAASQ, FLGFITGFLISIAVVAGIAGI, QIHIAVTGALFLILLGVNFWL, AILAVAAGLVAILFIIAAIIG, and IGTAMLVITAILAGGVYPWVI. 3 disordered regions span residues 490-518, 888-923, and 971-998; these read GAPDGAPNREQDRPAGREGGGETQYTFSG, LFGGDSGATAGDSDNNGQTPTSPPGTTPPPAGPTDA, and QARLDATPAPTATPGATPSATPSPSPSS. Residues 496-509 show a composition bias toward basic and acidic residues; that stretch reads PNREQDRPAGREGG. The segment covering 908–919 has biased composition (pro residues); it reads TSPPGTTPPPAG. Positions 976 to 990 are enriched in low complexity; it reads ATPAPTATPGATPSA.

The protein belongs to the UPF0182 family.

The protein localises to the cell membrane. This Paenarthrobacter aurescens (strain TC1) protein is UPF0182 protein AAur_2732.